The primary structure comprises 570 residues: Hydroxylamine reductase (570 aa).

Residues Cys5, Cys8, Cys17, and Cys23 each coordinate [4Fe-4S] cluster. Residues His266, Glu290, Cys334, Cys425, Cys453, Cys478, Glu513, and Lys515 each coordinate hybrid [4Fe-2O-2S] cluster. Cys425 carries the post-translational modification Cysteine persulfide.

The protein belongs to the HCP family. [4Fe-4S] cluster serves as cofactor. It depends on hybrid [4Fe-2O-2S] cluster as a cofactor.

The protein resides in the cytoplasm. The catalysed reaction is A + NH4(+) + H2O = hydroxylamine + AH2 + H(+). Functionally, catalyzes the reduction of hydroxylamine to form NH(3) and H(2)O. The protein is Hydroxylamine reductase of Clostridium botulinum (strain Langeland / NCTC 10281 / Type F).